The sequence spans 90 residues: Acylphosphatase (90 aa).

The region spanning 3–90 is the Acylphosphatase-like domain; it reads QKLFIVTGHV…EQFEHFEIRR (88 aa). Active-site residues include R18 and N36.

It belongs to the acylphosphatase family.

It catalyses the reaction an acyl phosphate + H2O = a carboxylate + phosphate + H(+). In Actinobacillus pleuropneumoniae serotype 5b (strain L20), this protein is Acylphosphatase (acyP).